The following is a 526-amino-acid chain: PTS system alpha-glucoside-specific EIICB component (526 aa).

Residues 1–417 (MLKHFQRLGG…YNVKTSGRED (417 aa)) form the PTS EIIC type-1 domain. 12 helical membrane-spanning segments follow: residues 12–32 (LFAPVLLFPFAGLVVALTIIL), 59–79 (GWTVFRQLPLIFAIGLPIGLA), 88–108 (LAVLATYLTYNYFISAILTFW), 132–152 (IKTLDTSIVGAIVISGITIYI), 173–193 (LVSAIAFVVMIPCAYITCLVW), 200–220 (ISSLQALMVTSGTFGVWLYTF), 224–244 (ILIPTGLHHFIYGPFIFGPAV), 274–294 (GGFALHGNSKIFGCIGIALAM), 305–325 (IVSGLLIPAALTAALVGITEP), 330–350 (FLFIAPFLFVVHAVLAATMAA), 355–375 (FGVVKYGSGIIEIAALNWLPL), and 381–401 (GVMFTQLAIGVVFIGIHYLVF). The region spanning 447–526 (SGKAKAFLEA…ESFENLMEQN (80 aa)) is the PTS EIIB type-1 domain. Cys469 (phosphocysteine intermediate; for EIIB activity) is an active-site residue.

The protein resides in the cell membrane. The phosphoenolpyruvate-dependent sugar phosphotransferase system (sugar PTS), a major carbohydrate active -transport system, catalyzes the phosphorylation of incoming sugar substrates concomitantly with their translocation across the cell membrane. This system is involved in alpha-glucoside transport. The chain is PTS system alpha-glucoside-specific EIICB component (malB) from Fusobacterium mortiferum.